Consider the following 10287-residue polypeptide: Putative E3 ubiquitin-protein ligase protein PFF1365c (10287 aa).

The TPR 1 repeat unit spans residues 47-82 (TRFFKSISNYGEFLLLQSSSRVISSYEHILRLLHQA). Low complexity predominate over residues 566–589 (TNKSRDNINQNTNTNNNNNNNNNN). Residues 566–592 (TNKSRDNINQNTNTNNNNNNNNNNDGD) form a disordered region. A TPR 2 repeat occupies 631–665 (YPMFLKIQNKPQRCLKDISKPCEYYSNTLPIYGSY). 3 disordered regions span residues 740-823 (KSSV…NKKK), 1221-1251 (NNSNYNDNSHYTHNSLKSQNISSSTYSSSSS), and 1599-1670 (YVDD…DDNN). 3 stretches are compositionally biased toward low complexity: residues 767–810 (KANN…NNNN), 1221–1235 (NNSNYNDNSHYTHNS), and 1242–1251 (SSSTYSSSSS). Over residues 1601-1635 (DDNEEDEGEEDKSEDYEYCDDEQQNDVYEDTEEES) the composition is skewed to acidic residues. Basic residues predominate over residues 1641–1653 (RKERRVHQKKKNS). A compositionally biased stretch (low complexity) spans 1654–1670 (KVSINKKTNNSLSDDNN). 3 helical membrane-spanning segments follow: residues 1821 to 1841 (ACTFIISGIIPCLGYVTTLFV), 1860 to 1880 (LKMALNIWPMFLKITLQGLLT), and 1900 to 1920 (ECCISITSLATHFLTLFTIMI). The segment covering 2070–2080 (SRRGIPLKKKS) has biased composition (basic residues). The disordered stretch occupies residues 2070–2112 (SRRGIPLKKKSERNNSKEENVNNMDHNNNNNSNSNNNNFFHRG). The span at 2090-2107 (VNNMDHNNNNNSNSNNNN) shows a compositional bias: low complexity. An ANK 1 repeat occupies 2116-2145 (TNPRNNNITCDRKNMEFLKKLMKNDHDAVQ). The TPR 3 repeat unit spans residues 2141-2175 (HDAVQCLGKAYSVFHKNFERAQIAFVAVFLHLTGY). Residues 2854 to 2865 (NLSSNKRSQKGY) show a composition bias toward polar residues. Disordered regions lie at residues 2854–2945 (NLSS…SKEP), 3087–3113 (KNRNSNNNNNNNNTNNSNNSNNNNNIN), 3303–3344 (NGHT…NDRG), 3561–3599 (FSKGKQKKEMQENEDEKIKNKGKNKTKTNDDKKKNSSIN), 3942–3998 (TMEN…KDHI), 4076–4157 (LFNS…INYY), 4695–4716 (EKKNFQDDSIMSNRQSDNKEEG), 4886–4972 (SPYF…LRNS), and 4984–5051 (YRNK…SNAD). Positions 2886 to 2929 (SLDKYNDKEKKNDKINNGDTKNSDDGKIDMDDKKYYNDDLKNSD) are enriched in basic and acidic residues. The span at 3090 to 3113 (NSNNNNNNNNTNNSNNSNNNNNIN) shows a compositional bias: low complexity. Residues 3316–3335 (YDDDNCDNYDNYDNDNENDN) show a composition bias toward acidic residues. Basic and acidic residues-rich tracts occupy residues 3567–3579 (KKEMQENEDEKIK) and 3965–3974 (PSKDKSKHYN). Over residues 3975 to 3992 (DNNNNNNDDNNSNNNNDY) the composition is skewed to low complexity. Over residues 4079–4094 (SKKDGSSNNDKNDNSN) the composition is skewed to basic and acidic residues. Low complexity-rich tracts occupy residues 4095 to 4116 (KNRNNYNNNDDNNNNDDNNNNN) and 4124 to 4157 (NINNNYNNNNNNNNRNNSNSNNSNNSDNNNINYY). Over residues 4906-4917 (YNIQNSDNSNIG) the composition is skewed to polar residues. 2 stretches are compositionally biased toward low complexity: residues 4918–4942 (DSELNVNVNDNDNSSCGSNSKDSLN) and 4953–4972 (NSSSESGNTNSNNENSLRNS). Basic residues predominate over residues 5026–5045 (KIKKNKSYKNKTHKNKKQKN). The next 5 helical transmembrane spans lie at 5058–5078 (LYGYTLCLIGTKSIMCCCIIL), 5106–5126 (FIKLFFFIDIGISDVLIKYFA), 5552–5572 (EEILNIFSIMYLFRICIYYLG), 5716–5736 (LPIFLGIDVCRLVYWCCVVYI), and 5815–5835 (FLSYVFHCVNICGSSVINQII). The tract at residues 5848 to 5917 (VNKNKGNDNV…NNNNVRNSNN (70 aa)) is disordered. Residues 6004–6032 (GINSLYVNGTNGNLKTDKILLHNFSNFDL) form an ANK 2 repeat. A TPR 4 repeat occupies 6051-6084 (LVHYFACAAYYIKRADVYNIMNYYNEHTHANFKQ). Disordered regions lie at residues 6495–6527 (EEEKENENEKEVEKDENVHDEKDKVEQIEHEKK), 7123–7147 (EKKKKTGSNNIGSNTNIHELSDNNR), and 7183–7217 (NKNNTSSSSNNNNNNKNNNNNNDNNNDNDNICSNS). Positions 6501 to 6527 (ENEKEVEKDENVHDEKDKVEQIEHEKK) are enriched in basic and acidic residues. The segment covering 7129-7147 (GSNNIGSNTNIHELSDNNR) has biased composition (polar residues). TPR repeat units lie at residues 7347–7380 (SNDSSNYSLYYIGCKEFKLCIDSYDSIFPAKPFI) and 7577–7610 (NNNNDSMNNHKDDMNNYNDNINNYVESMNNYDDI). Positions 7571–7583 (DDGNNNNNNNDSM) are enriched in low complexity. 2 disordered regions span residues 7571-7590 (DDGNNNNNNNDSMNNHKDDM) and 7653-7712 (SNER…VNNI). Basic and acidic residues predominate over residues 7696–7706 (DNNKDKDDGNH). ANK repeat units follow at residues 7809–7839 (KYLTPLMLACRIGCEECVQNIIEKGKVNPNK), 7845–7875 (EKETPLMVAAQYGHSRIVCMLICVYGVQVNK), and 7880–7917 (GNTALHKILLNYSNTEGKKNSTIKIVQLLLKLGADLTI). Disordered stretches follow at residues 8208–8300 (LKDD…SAKN) and 8413–8448 (ALNSNMSNNNNNNNNSNNNNNNNSNNNNNNYNNNYN). Residues 8219–8259 (YQKPYDKKVINKNKNDNYDKNDNYDKKDNYDTNDKNDKNNC) show a composition bias toward basic and acidic residues. Positions 8277–8300 (VMNTNSSGRRTISKNSPNLSSAKN) are enriched in polar residues. Residues 8415 to 8448 (NSNMSNNNNNNNNSNNNNNNNSNNNNNNYNNNYN) show a composition bias toward low complexity. 2 TPR repeats span residues 8782–8815 (QTCDKYIYKSEMKEEMYNKSNELYNNSLNNSNNI) and 9550–9584 (DLPIQLSSYLFIKKLLKHDTCLKLWKECLKYITSS). 2 disordered regions span residues 9795-9818 (MGSDNILKDGVHKDNNNQKGHKYD) and 9913-9979 (NVLL…SKNT). Basic and acidic residues-rich tracts occupy residues 9800-9818 (ILKDGVHKDNNNQKGHKYD) and 9913-9930 (NVLLRDPHENENMRDDIR). Residues 9931 to 9971 (NNMNNNNNNNNNNNNNNNNNNNNNNNNNNNNNNNNNNNNLN) show a composition bias toward low complexity. Residues 9938–10273 (NNNNNNNNNN…IKNCTAIDLD (336 aa)) enclose the HECT domain. The active-site Glycyl thioester intermediate is Cys10241.

The protein localises to the membrane. It catalyses the reaction S-ubiquitinyl-[E2 ubiquitin-conjugating enzyme]-L-cysteine + [acceptor protein]-L-lysine = [E2 ubiquitin-conjugating enzyme]-L-cysteine + N(6)-ubiquitinyl-[acceptor protein]-L-lysine.. The protein operates within protein modification; protein ubiquitination. Functionally, putative E3 ubiquitin-protein ligase. This Plasmodium falciparum (isolate 3D7) protein is Putative E3 ubiquitin-protein ligase protein PFF1365c.